Reading from the N-terminus, the 155-residue chain is Transcriptional repressor NrdR (155 aa).

Residues 3–34 (CPFCGNVDTQVKDSRPAEDHVSIRRRRFCPAC) fold into a zinc finger. The ATP-cone domain maps to 49 to 139 (LVVIKTNGKR…VYKNFQAADD (91 aa)).

Belongs to the NrdR family. Zn(2+) serves as cofactor.

Its function is as follows. Negatively regulates transcription of bacterial ribonucleotide reductase nrd genes and operons by binding to NrdR-boxes. This Ruegeria sp. (strain TM1040) (Silicibacter sp.) protein is Transcriptional repressor NrdR.